Consider the following 156-residue polypeptide: Small ribosomal subunit protein uS7 (156 aa).

The protein belongs to the universal ribosomal protein uS7 family. In terms of assembly, part of the 30S ribosomal subunit. Contacts proteins S9 and S11.

Functionally, one of the primary rRNA binding proteins, it binds directly to 16S rRNA where it nucleates assembly of the head domain of the 30S subunit. Is located at the subunit interface close to the decoding center, probably blocks exit of the E-site tRNA. The sequence is that of Small ribosomal subunit protein uS7 from Clostridium botulinum (strain Okra / Type B1).